The primary structure comprises 641 residues: Sodium-dependent nutrient amino acid transporter 1 (641 aa).

A compositionally biased stretch (polar residues) spans Met-1–Glu-21. Residues Met-1–Thr-37 are disordered. Residues Met-1–Asn-38 are Cytoplasmic-facing. Basic and acidic residues predominate over residues Asn-22–Glu-35. 3 helical membrane-spanning segments follow: residues Trp-39–Val-59, Gly-72–Leu-92, and Thr-125–Val-145. N-linked (GlcNAc...) asparagine glycans are attached at residues Asn-181, Asn-190, and Asn-198. 9 helical membrane-spanning segments follow: residues Pro-229–Met-249, Ala-258–Val-278, Ala-307–Ser-327, Ile-341–Leu-361, Leu-401–Leu-421, Val-441–Gly-461, Thr-474–Leu-494, Cys-516–Ile-536, and Ile-552–Tyr-572.

This sequence belongs to the sodium:neurotransmitter symporter (SNF) (TC 2.A.22) family.

It is found in the membrane. In terms of biological role, unusual broad substrate spectrum amino acid:sodium cotransporter that promotes absorption of the D isomers of essential amino acids. Neutral amino acids are the preferred substrates, especially methionine and phenylalanine. The polypeptide is Sodium-dependent nutrient amino acid transporter 1 (Drosophila willistoni (Fruit fly)).